Reading from the N-terminus, the 450-residue chain is Adenylosuccinate lyase (450 aa).

Residues 9–10 (RY), 75–77 (HHD), and 101–102 (TS) contribute to the N(6)-(1,2-dicarboxyethyl)-AMP site. Catalysis depends on His-149, which acts as the Proton donor/acceptor. Gln-223 is a N(6)-(1,2-dicarboxyethyl)-AMP binding site. Ser-273 (proton donor/acceptor) is an active-site residue. Residues Ser-274, 279–281 (KRN), and 318–322 (SVERV) each bind N(6)-(1,2-dicarboxyethyl)-AMP.

Belongs to the lyase 1 family. Adenylosuccinate lyase subfamily. As to quaternary structure, homotetramer. Residues from neighboring subunits contribute catalytic and substrate-binding residues to each active site.

It catalyses the reaction N(6)-(1,2-dicarboxyethyl)-AMP = fumarate + AMP. The enzyme catalyses (2S)-2-[5-amino-1-(5-phospho-beta-D-ribosyl)imidazole-4-carboxamido]succinate = 5-amino-1-(5-phospho-beta-D-ribosyl)imidazole-4-carboxamide + fumarate. Its pathway is purine metabolism; AMP biosynthesis via de novo pathway; AMP from IMP: step 2/2. It functions in the pathway purine metabolism; IMP biosynthesis via de novo pathway; 5-amino-1-(5-phospho-D-ribosyl)imidazole-4-carboxamide from 5-amino-1-(5-phospho-D-ribosyl)imidazole-4-carboxylate: step 2/2. Its function is as follows. Catalyzes two reactions in de novo purine nucleotide biosynthesis. Catalyzes the breakdown of 5-aminoimidazole- (N-succinylocarboxamide) ribotide (SAICAR or 2-[5-amino-1-(5-phospho-beta-D-ribosyl)imidazole-4-carboxamido]succinate) to 5-aminoimidazole-4-carboxamide ribotide (AICAR or 5-amino-1-(5-phospho-beta-D-ribosyl)imidazole-4-carboxamide) and fumarate, and of adenylosuccinate (ADS or N(6)-(1,2-dicarboxyethyl)-AMP) to adenosine monophosphate (AMP) and fumarate. The sequence is that of Adenylosuccinate lyase (purB) from Pyrococcus abyssi (strain GE5 / Orsay).